A 143-amino-acid chain; its full sequence is Large ribosomal subunit protein uL11 (143 aa).

Belongs to the universal ribosomal protein uL11 family. In terms of assembly, part of the ribosomal stalk of the 50S ribosomal subunit. Interacts with L10 and the large rRNA to form the base of the stalk. L10 forms an elongated spine to which L12 dimers bind in a sequential fashion forming a multimeric L10(L12)X complex. In terms of processing, one or more lysine residues are methylated.

Forms part of the ribosomal stalk which helps the ribosome interact with GTP-bound translation factors. This is Large ribosomal subunit protein uL11 from Dechloromonas aromatica (strain RCB).